A 271-amino-acid polypeptide reads, in one-letter code: Inactive phospholipid phosphatase 7 (271 aa).

A disordered region spans residues 1-66 (MPASQSRARA…RERRQSQQLP (66 aa)). The Cytoplasmic portion of the chain corresponds to 1-112 (MPASQSRARA…AASWASARSM (112 aa)). Residues S43 and S62 each carry the phosphoserine modification. The segment at 70–91 (CMQLNPSFKGIAFNSLLAIDIC) is interaction with MTOR. Residues 113–133 (VKLIGITGHGIPWIGGTILCL) traverse the membrane as a helical segment. The Extracellular portion of the chain corresponds to 134-141 (VKSSTLAG). A helical membrane pass occupies residues 142 to 162 (QEVLMNLLLALLLDIMTVAGV). Residues 163 to 202 (QKLIKRRGPYETSPSLLDYLTMDIYAFPAGHASRAAMVSK) are Cytoplasmic-facing. A helical transmembrane segment spans residues 203 to 223 (FFLSHLVLAVPLRVLLVLWAL). Residues 224-239 (CVGLSRVMIGRHHVTD) are Extracellular-facing. Residues 240-260 (VLSGFVIGYLQFRLVELVWMP) form a helical membrane-spanning segment. Over 261-271 (SSTCQMLISAW) the chain is Cytoplasmic.

It belongs to the PA-phosphatase related phosphoesterase family. In terms of assembly, homo and heterooligomer. Interacts with MTOR; controls MTOR-dependent IGF2 expression during myoblast differentiation.

It localises to the nucleus envelope. The protein localises to the endoplasmic reticulum membrane. Its subcellular location is the membrane. Functionally, plays a role as negative regulator of myoblast differentiation, in part through effects on MTOR signaling. Has no detectable enzymatic activity. This chain is Inactive phospholipid phosphatase 7, found in Homo sapiens (Human).